The sequence spans 343 residues: CCN family member 3 (343 aa).

Residues 1-18 (MTPHLALCFILLIQQVAS) form the signal peptide. The 72-residue stretch at 19 to 90 (QKCPSQCDQC…RMETGTCMAL (72 aa)) folds into the IGFBP N-terminal domain. 6 cysteine pairs are disulfide-bonded: Cys-21/Cys-46, Cys-25/Cys-48, Cys-28/Cys-49, Cys-35/Cys-52, Cys-60/Cys-74, and Cys-66/Cys-87. Residues 93–159 (NSCVFDGVVY…GECCEKWVCD (67 aa)) enclose the VWFC domain. The TSP type-1 domain maps to 190–235 (ACIAQTTEWSACSKTCGMGVSSRVTNRNARCEMQKQIRLCMVRSCE). Disulfide bonds link Cys-249–Cys-286, Cys-266–Cys-300, Cys-277–Cys-316, Cys-280–Cys-318, and Cys-285–Cys-322. The 75-residue stretch at 249-323 (CVRVRKTTKP…STCVCHYNCP (75 aa)) folds into the CTCK domain. Residue Asn-265 is glycosylated (N-linked (GlcNAc...) asparagine).

Belongs to the CCN family.

Its subcellular location is the secreted. The protein localises to the cytoplasm. It is found in the cell junction. The protein resides in the gap junction. Immediate-early protein playing a role in various cellular processes including proliferation, adhesion, migration, differentiation and survival. Acts by binding to integrins or membrane receptors such as NOTCH1. The polypeptide is CCN family member 3 (ccn3) (Xenopus laevis (African clawed frog)).